The following is a 549-amino-acid chain: Chaperonin GroEL (549 aa).

ATP contacts are provided by residues 29–32 (TLGP), Lys-50, 86–90 (DGTTT), Gly-414, 477–479 (NAA), and Asp-493.

It belongs to the chaperonin (HSP60) family. In terms of assembly, forms a cylinder of 14 subunits composed of two heptameric rings stacked back-to-back. Interacts with the co-chaperonin GroES.

The protein localises to the cytoplasm. It carries out the reaction ATP + H2O + a folded polypeptide = ADP + phosphate + an unfolded polypeptide.. In terms of biological role, together with its co-chaperonin GroES, plays an essential role in assisting protein folding. The GroEL-GroES system forms a nano-cage that allows encapsulation of the non-native substrate proteins and provides a physical environment optimized to promote and accelerate protein folding. The protein is Chaperonin GroEL of Geotalea uraniireducens (strain Rf4) (Geobacter uraniireducens).